The following is a 61-amino-acid chain: MPNIFSLICICLNSALQPSGFFFAKLPEAYAFLNPIVDFMPVIPVLFFLLAFVWQAAVSFR.

A propeptide spanning residues 1–24 is cleaved from the precursor; that stretch reads MPNIFSLICICLNSALQPSGFFFA. The chain crosses the membrane as a helical span at residues 36-56; sequence IVDFMPVIPVLFFLLAFVWQA.

Belongs to the PsbK family. PSII is composed of 1 copy each of membrane proteins PsbA, PsbB, PsbC, PsbD, PsbE, PsbF, PsbH, PsbI, PsbJ, PsbK, PsbL, PsbM, PsbT, PsbX, PsbY, PsbZ, Psb30/Ycf12, at least 3 peripheral proteins of the oxygen-evolving complex and a large number of cofactors. It forms dimeric complexes.

The protein resides in the plastid. The protein localises to the chloroplast thylakoid membrane. In terms of biological role, one of the components of the core complex of photosystem II (PSII). PSII is a light-driven water:plastoquinone oxidoreductase that uses light energy to abstract electrons from H(2)O, generating O(2) and a proton gradient subsequently used for ATP formation. It consists of a core antenna complex that captures photons, and an electron transfer chain that converts photonic excitation into a charge separation. The sequence is that of Photosystem II reaction center protein K from Nymphaea alba (White water-lily).